We begin with the raw amino-acid sequence, 173 residues long: Photosystem I assembly protein Ycf3 (173 aa).

TPR repeat units follow at residues 35–68 (AYIY…EENK), 72–105 (GETL…NPKQ), and 120–153 (GRYA…YPGG).

It belongs to the Ycf3 family.

It localises to the cellular thylakoid membrane. Its function is as follows. Essential for the assembly of the photosystem I (PSI) complex. May act as a chaperone-like factor to guide the assembly of the PSI subunits. The polypeptide is Photosystem I assembly protein Ycf3 (Prochlorococcus marinus (strain MIT 9215)).